The primary structure comprises 156 residues: Enhancer of split M1 protein (156 aa).

An N-terminal signal peptide occupies residues 1-19 (MMSQTLTLCCLALVACVYG). Kazal-like domains are found at residues 23–81 (STND…AWCS) and 96–156 (KLEV…EEKC). Disulfide bonds link C29–C62, C33–C55, C102–C135, C106–C128, and C114–C156.

In Drosophila melanogaster (Fruit fly), this protein is Enhancer of split M1 protein (Kaz-m1).